The chain runs to 126 residues: UPF0325 protein PBPRA2971 (126 aa).

This sequence belongs to the UPF0325 family.

The polypeptide is UPF0325 protein PBPRA2971 (Photobacterium profundum (strain SS9)).